Consider the following 380-residue polypeptide: PqqA peptide cyclase (380 aa).

Residues 8–223 (VNPPLWLLAE…VADYRQKMAA (216 aa)) enclose the Radical SAM core domain. Positions 22, 26, and 29 each coordinate [4Fe-4S] cluster.

It belongs to the radical SAM superfamily. PqqE family. In terms of assembly, interacts with PqqD. The interaction is necessary for activity of PqqE. Requires [4Fe-4S] cluster as cofactor.

It catalyses the reaction [PQQ precursor protein] + S-adenosyl-L-methionine = E-Y cross-linked-[PQQ precursor protein] + 5'-deoxyadenosine + L-methionine + H(+). It participates in cofactor biosynthesis; pyrroloquinoline quinone biosynthesis. In terms of biological role, catalyzes the cross-linking of a glutamate residue and a tyrosine residue in the PqqA protein as part of the biosynthesis of pyrroloquinoline quinone (PQQ). The polypeptide is PqqA peptide cyclase (Klebsiella pneumoniae (strain 342)).